A 103-amino-acid polypeptide reads, in one-letter code: Small ribosomal subunit protein uS10 (103 aa).

Belongs to the universal ribosomal protein uS10 family. As to quaternary structure, part of the 30S ribosomal subunit.

In terms of biological role, involved in the binding of tRNA to the ribosomes. The polypeptide is Small ribosomal subunit protein uS10 (Xanthomonas axonopodis pv. citri (strain 306)).